A 177-amino-acid polypeptide reads, in one-letter code: Small ribosomal subunit protein uS5 (177 aa).

The S5 DRBM domain occupies 21 to 84; the sequence is LKEKMISVNR…DEARRGMIKI (64 aa).

The protein belongs to the universal ribosomal protein uS5 family. As to quaternary structure, part of the 30S ribosomal subunit. Contacts proteins S4 and S8.

With S4 and S12 plays an important role in translational accuracy. Functionally, located at the back of the 30S subunit body where it stabilizes the conformation of the head with respect to the body. The polypeptide is Small ribosomal subunit protein uS5 (Nitrosomonas eutropha (strain DSM 101675 / C91 / Nm57)).